The primary structure comprises 142 residues: DNA-directed RNA polymerase subunit omega (142 aa).

Positions 104-142 are disordered; the sequence is FNTDADVDQESTDIQDDEVENEMSNQDSEDIDDEVDNEE. Over residues 108–142 the composition is skewed to acidic residues; that stretch reads ADVDQESTDIQDDEVENEMSNQDSEDIDDEVDNEE.

The protein belongs to the RNA polymerase subunit omega family. As to quaternary structure, the RNAP catalytic core consists of 2 alpha, 1 beta, 1 beta' and 1 omega subunit. When a sigma factor is associated with the core the holoenzyme is formed, which can initiate transcription.

The enzyme catalyses RNA(n) + a ribonucleoside 5'-triphosphate = RNA(n+1) + diphosphate. Its function is as follows. Promotes RNA polymerase assembly. Latches the N- and C-terminal regions of the beta' subunit thereby facilitating its interaction with the beta and alpha subunits. The chain is DNA-directed RNA polymerase subunit omega from Wolbachia sp. subsp. Brugia malayi (strain TRS).